We begin with the raw amino-acid sequence, 337 residues long: Adenine deaminase (337 aa).

Histidine 14, histidine 16, and histidine 194 together coordinate Zn(2+). Glutamate 197 acts as the Proton donor in catalysis. Zn(2+) is bound at residue aspartate 275. Residue aspartate 276 coordinates substrate.

This sequence belongs to the metallo-dependent hydrolases superfamily. Adenosine and AMP deaminases family. Adenine deaminase type 2 subfamily. Zn(2+) serves as cofactor.

It carries out the reaction adenine + H2O + H(+) = hypoxanthine + NH4(+). In terms of biological role, catalyzes the hydrolytic deamination of adenine to hypoxanthine. Plays an important role in the purine salvage pathway and in nitrogen catabolism. This is Adenine deaminase from Vibrio parahaemolyticus serotype O3:K6 (strain RIMD 2210633).